The sequence spans 929 residues: Alanine--tRNA ligase (929 aa).

4 residues coordinate Zn(2+): histidine 619, histidine 623, cysteine 722, and histidine 726.

It belongs to the class-II aminoacyl-tRNA synthetase family. The cofactor is Zn(2+).

The protein resides in the cytoplasm. The catalysed reaction is tRNA(Ala) + L-alanine + ATP = L-alanyl-tRNA(Ala) + AMP + diphosphate. Functionally, catalyzes the attachment of alanine to tRNA(Ala) in a two-step reaction: alanine is first activated by ATP to form Ala-AMP and then transferred to the acceptor end of tRNA(Ala). Also edits incorrectly charged Ser-tRNA(Ala) and Gly-tRNA(Ala) via its editing domain. This is Alanine--tRNA ligase from Halobacterium salinarum (strain ATCC 29341 / DSM 671 / R1).